Consider the following 471-residue polypeptide: NALCN channel auxiliary factor 2 (471 aa).

Residues 47–67 traverse the membrane as a helical segment; the sequence is LASLLFFTVLLADHLWLCAGA. The tract at residues 76 to 115 is disordered; the sequence is SAMRPPWGAGRERQPVPPRAVLPPPPPSPGEPSASSGTCG. The span at 90 to 105 shows a compositional bias: pro residues; that stretch reads PVPPRAVLPPPPPSPG. The N-linked (GlcNAc...) asparagine glycan is linked to N120. Disordered regions lie at residues 158–178 and 399–424; these read EPTT…APEF and HYHP…GGSR. Pro residues predominate over residues 161-171; it reads TPAPPLRPPDS. Residues 432 to 452 traverse the membrane as a helical segment; sequence LCVLVLILLHTVVSFSSSQSG.

It belongs to the NALF family.

It is found in the membrane. Functionally, probable component of the NALCN channel complex, a channel that regulates the resting membrane potential and controls neuronal excitability. The sequence is that of NALCN channel auxiliary factor 2 (Nalf2) from Mus musculus (Mouse).